The chain runs to 211 residues: SOSS complex subunit B1 (211 aa).

Residues 22-92 constitute a DNA-binding region (OB); it reads IVLETGRVTK…TLYTGRGGDL (71 aa). The interval 110–211 is disordered; that stretch reads EPNPEYSAQQ…GKETRRSSKR (102 aa). Residues 115-128 are compositionally biased toward polar residues; that stretch reads YSAQQAPNKTVQND. Pro residues-rich tracts occupy residues 133 to 143 and 165 to 174; these read APQPPTGPPAT and PHPPHTPSHP.

The protein belongs to the SOSS-B family. SOSS-B1 subfamily. In terms of assembly, component of the SOSS complex, composed of SOSS-B (SOSS-B1/NABP2 or SOSS-B2/NABP1), SOSS-A/INTS3 and SOSS-C/INIP. SOSS complexes containing SOSS-B1/NABP2 are more abundant than complexes containing SOSS-B2/NABP1. Directly interacts with ATM, SOSS-A/INTS3 and RAD51. Interacts with INTS7. In terms of processing, phosphorylated by ATM in response to DNA damage. Phosphorylation prevents degradation by the proteasome, hence stabilization of the protein and accumulation within cells. Ubiquitinated in a FBXL5-dependent manner, leading to proteasomal degradation.

The protein localises to the nucleus. In terms of biological role, component of the SOSS complex, a multiprotein complex that functions downstream of the MRN complex to promote DNA repair and G2/M checkpoint. In the SOSS complex, acts as a sensor of single-stranded DNA that binds to single-stranded DNA, in particular to polypyrimidines. The SOSS complex associates with DNA lesions and influences diverse endpoints in the cellular DNA damage response including cell-cycle checkpoint activation, recombinational repair and maintenance of genomic stability. Required for efficient homologous recombination-dependent repair of double-strand breaks (DSBs) and ATM-dependent signaling pathways. In Bos taurus (Bovine), this protein is SOSS complex subunit B1 (NABP2).